We begin with the raw amino-acid sequence, 158 residues long: ATP synthase subunit b' (158 aa).

The chain crosses the membrane as a helical span at residues alanine 24–phenylalanine 44.

The protein belongs to the ATPase B chain family. F-type ATPases have 2 components, F(1) - the catalytic core - and F(0) - the membrane proton channel. F(1) has five subunits: alpha(3), beta(3), gamma(1), delta(1), epsilon(1). F(0) has four main subunits: a(1), b(1), b'(1) and c(10-14). The alpha and beta chains form an alternating ring which encloses part of the gamma chain. F(1) is attached to F(0) by a central stalk formed by the gamma and epsilon chains, while a peripheral stalk is formed by the delta, b and b' chains.

The protein resides in the cellular thylakoid membrane. F(1)F(0) ATP synthase produces ATP from ADP in the presence of a proton or sodium gradient. F-type ATPases consist of two structural domains, F(1) containing the extramembraneous catalytic core and F(0) containing the membrane proton channel, linked together by a central stalk and a peripheral stalk. During catalysis, ATP synthesis in the catalytic domain of F(1) is coupled via a rotary mechanism of the central stalk subunits to proton translocation. Functionally, component of the F(0) channel, it forms part of the peripheral stalk, linking F(1) to F(0). The b'-subunit is a diverged and duplicated form of b found in plants and photosynthetic bacteria. This is ATP synthase subunit b' from Synechococcus elongatus (strain ATCC 33912 / PCC 7942 / FACHB-805) (Anacystis nidulans R2).